The primary structure comprises 449 residues: Transcription factor AP-2 gamma (449 aa).

Residue lysine 10 forms a Glycyl lysine isopeptide (Lys-Gly) (interchain with G-Cter in SUMO) linkage. Residues 13–58 (EDCEDRHDSSSNGNPRIPHLSSPGQHLYSPAPPLSHTGVAEYQPPP) form a disordered region. The short motif at 59 to 64 (YFPPPY) is the PPxY motif element. The segment at 94 to 130 (AATGSQQQAWPGRQSQEGSSLASHHSRSASLIPHISG) is disordered. The segment covering 95–111 (ATGSQQQAWPGRQSQEG) has biased composition (polar residues). The segment covering 112-124 (SSLASHHSRSASL) has biased composition (low complexity). A Phosphoserine; by PKA modification is found at serine 251. The tract at residues 292–423 (RRKAAHVTLL…YIKEALIAID (132 aa)) is H-S-H (helix-span-helix), dimerization. A disordered region spans residues 426 to 449 (YMNPGDQSPADSSKTMEKMEKHRK). Serine 433 carries the post-translational modification Phosphoserine. The segment covering 439–449 (KTMEKMEKHRK) has biased composition (basic and acidic residues).

The protein belongs to the AP-2 family. In terms of assembly, binds DNA as a dimer. Can form homodimers or heterodimers with other AP-2 family members. Interacts with WWOX. Interacts with UBE2I. Interacts with KCTD1; this interaction represses transcription activation. Interacts with CITED2 (via C-terminus); the interaction stimulates TFAP2B-transcriptional activity. Interacts with CITED4. Interacts with MTA1. In terms of processing, sumoylated on Lys-10; which inhibits transcriptional activity. In terms of tissue distribution, expressed in lung, ovary and testis. Expressed in most squamous epithelia. Also, detected in several exocrine glands including the prostate, the preputial and salivary glands, serous glands of the tongue and ocular harderian glands.

Its subcellular location is the nucleus. Sequence-specific DNA-binding transcription factor that interacts with cellular enhancer elements to regulate transcription of selected genes, and which plays a key role in early embryonic development. AP-2 factors bind to the consensus sequence 5'-GCCNNNGGC-3' and activate genes involved in a large spectrum of important biological functions. TFAP2C plays a key role in early embryonic development by regulating both inner cell mass (ICM) and trophectoderm differentiation. At the 8-cell stage, during morula development, controls expression of cell-polarity genes. Upon trophoblast commitment, binds to late trophectoderm genes in blastocysts together with CDX2, and later to extra-embryonic ectoderm genes together with SOX2. Binds to both closed and open chromatin with other transcription factors. The chain is Transcription factor AP-2 gamma from Mus musculus (Mouse).